The primary structure comprises 279 residues: 2-dehydro-3-deoxyphosphooctonate aldolase (279 aa).

This sequence belongs to the KdsA family.

Its subcellular location is the cytoplasm. The catalysed reaction is D-arabinose 5-phosphate + phosphoenolpyruvate + H2O = 3-deoxy-alpha-D-manno-2-octulosonate-8-phosphate + phosphate. It participates in carbohydrate biosynthesis; 3-deoxy-D-manno-octulosonate biosynthesis; 3-deoxy-D-manno-octulosonate from D-ribulose 5-phosphate: step 2/3. It functions in the pathway bacterial outer membrane biogenesis; lipopolysaccharide biosynthesis. This Azoarcus sp. (strain BH72) protein is 2-dehydro-3-deoxyphosphooctonate aldolase.